Reading from the N-terminus, the 181-residue chain is ATP synthase subunit delta (181 aa).

It belongs to the ATPase delta chain family. F-type ATPases have 2 components, F(1) - the catalytic core - and F(0) - the membrane proton channel. F(1) has five subunits: alpha(3), beta(3), gamma(1), delta(1), epsilon(1). F(0) has three main subunits: a(1), b(2) and c(10-14). The alpha and beta chains form an alternating ring which encloses part of the gamma chain. F(1) is attached to F(0) by a central stalk formed by the gamma and epsilon chains, while a peripheral stalk is formed by the delta and b chains.

It is found in the cell inner membrane. In terms of biological role, f(1)F(0) ATP synthase produces ATP from ADP in the presence of a proton or sodium gradient. F-type ATPases consist of two structural domains, F(1) containing the extramembraneous catalytic core and F(0) containing the membrane proton channel, linked together by a central stalk and a peripheral stalk. During catalysis, ATP synthesis in the catalytic domain of F(1) is coupled via a rotary mechanism of the central stalk subunits to proton translocation. Functionally, this protein is part of the stalk that links CF(0) to CF(1). It either transmits conformational changes from CF(0) to CF(1) or is implicated in proton conduction. This chain is ATP synthase subunit delta, found in Chlorobaculum tepidum (strain ATCC 49652 / DSM 12025 / NBRC 103806 / TLS) (Chlorobium tepidum).